A 249-amino-acid chain; its full sequence is MSVEDLKATVTKLQDRISYLEQKAGVVPNVPKSVRMVLIGPPGAGKGTQAPNLKEKYCACHLATGDMLRAQVAAKSALGVEAKKIMDQGGLVSDEIMVNMIKSELENNKECSNGFILDGFPRTIPQAEKLDSMLETRKTPLENAVELKIDDELLVARITGRLVHPASGRSYHKLFNPPKKDMIDDVSGDALVQRSDDNEDALKKRLVTYHKQTEPIVDYYRKTGIWSGVDASQKPGKVWDDILKCLGQK.

ATP is bound at residue 43-48 (GAGKGT). The segment at 63–92 (ATGDMLRAQVAAKSALGVEAKKIMDQGGLV) is NMP. Residues Thr64, Arg69, 90–92 (GLV), 119–122 (GFPR), and Gln126 contribute to the AMP site. The interval 160–197 (GRLVHPASGRSYHKLFNPPKKDMIDDVSGDALVQRSDD) is LID. Residues Arg161 and 170–171 (SY) each bind ATP. AMP-binding residues include Arg194 and Arg205. Residue Gln233 coordinates ATP.

The protein belongs to the adenylate kinase family. AK2 subfamily. In terms of assembly, monomer.

The protein resides in the cytoplasm. It localises to the cytosol. It is found in the mitochondrion intermembrane space. The catalysed reaction is AMP + ATP = 2 ADP. Its function is as follows. Catalyzes the reversible transfer of the terminal phosphate group between ATP and AMP. Plays an important role in cellular energy homeostasis and in adenine nucleotide metabolism. Adenylate kinase activity is critical for regulation of the phosphate utilization and the AMP de novo biosynthesis pathways. This chain is Adenylate kinase, found in Debaryomyces hansenii (strain ATCC 36239 / CBS 767 / BCRC 21394 / JCM 1990 / NBRC 0083 / IGC 2968) (Yeast).